The primary structure comprises 514 residues: Putative GTP-binding protein 6 (514 aa).

Positions Trp48–Asp71 are disordered. Residues Glu59–Asp71 show a composition bias toward acidic residues. In terms of domain architecture, Hflx-type G spans Pro285–Thr449. Positions 298 and 319 each coordinate Mg(2+).

It belongs to the TRAFAC class OBG-HflX-like GTPase superfamily. HflX GTPase family. Mg(2+) serves as cofactor.

In Mus musculus (Mouse), this protein is Putative GTP-binding protein 6 (Gtpbp6).